Consider the following 439-residue polypeptide: Microfibrillar-associated protein 1A (439 aa).

Residues 1–200 are disordered; the sequence is MSVPSALMKQ…SEDEMEPRLK (200 aa). S2 is modified (N-acetylserine). Positions 23–34 are enriched in basic and acidic residues; it reads RNEKGEISMEKV. Phosphoserine is present on residues S52 and S53. A compositionally biased stretch (basic and acidic residues) spans 61–70; it reads QFIKKAKEQE. A Glycyl lysine isopeptide (Lys-Gly) (interchain with G-Cter in SUMO2) cross-link involves residue K67. Positions 71–81 are enriched in acidic residues; it reads AEPEEQEEDSS. Phosphoserine is present on residues S94, S116, S118, S132, and S133. 2 stretches are compositionally biased toward acidic residues: residues 112–122 and 131–144; these read VVGESDSEVEG and DSSE…DDEE. Basic and acidic residues predominate over residues 145–163; it reads IERRRGMMRQRAQERKNEE. The segment covering 178-195 has biased composition (acidic residues); it reads ESESESEYEEYTDSEDEM. A Glycyl lysine isopeptide (Lys-Gly) (interchain with G-Cter in SUMO2) cross-link involves residue K249. T267 is subject to Phosphothreonine. K357 participates in a covalent cross-link: Glycyl lysine isopeptide (Lys-Gly) (interchain with G-Cter in SUMO2). A Phosphoserine modification is found at S361. Glycyl lysine isopeptide (Lys-Gly) (interchain with G-Cter in SUMO2) cross-links involve residues K371, K381, K415, and K418. Residue S432 is modified to Phosphoserine.

The protein belongs to the MFAP1 family. In terms of assembly, component of the spliceosome B complex. Interacts with PRPF38A (via N-terminal interaction domain).

It is found in the nucleus. Involved in pre-mRNA splicing as a component of the spliceosome. The sequence is that of Microfibrillar-associated protein 1A from Mus musculus (Mouse).